The sequence spans 488 residues: DNA polymerase processivity factor (488 aa).

Disordered regions lie at residues 1 to 26 (MTDSPGGVAPASPVEDASDASLGQPE), 331 to 453 (SPSA…RSGS), and 469 to 488 (PGAFSAFRGGPQTPYGFGFP). Residues 331 to 344 (SPSAGSSASRASGS) show a composition bias toward low complexity. The span at 345 to 355 (EPTDSQDSASD) shows a compositional bias: polar residues. Residues 368–379 (AARAGEAGALHA) show a composition bias toward low complexity. The segment covering 383-393 (PSSTTRVTPTT) has biased composition (polar residues). The Bipartite nuclear localization signal motif lies at 394 to 413 (KRGRSGGEDARADTALKKPK). Over residues 398 to 409 (SGGEDARADTAL) the composition is skewed to basic and acidic residues. The segment covering 437 to 453 (ADGTAARPAAPDARSGS) has biased composition (low complexity).

This sequence belongs to the herpesviridae DNA polymerase processivity factor family. Interacts with the DNA polymerase catalytic subunit UL30. Interacts with the origin-binding protein.

It localises to the host nucleus. Plays an essential role in viral DNA replication by acting as the polymerase accessory subunit. Associates with the viral polymerase to increase its processivity and forms high-affinity direct interactions with DNA. Facilitates the origin-binding protein UL9 loading onto DNA thus increasing its ability to assemble into a functional complex capable of unwinding duplex DNA. This is DNA polymerase processivity factor from Homo sapiens (Human).